The primary structure comprises 171 residues: Adenine phosphoribosyltransferase (171 aa).

Belongs to the purine/pyrimidine phosphoribosyltransferase family. Homodimer.

It localises to the cytoplasm. It carries out the reaction AMP + diphosphate = 5-phospho-alpha-D-ribose 1-diphosphate + adenine. The protein operates within purine metabolism; AMP biosynthesis via salvage pathway; AMP from adenine: step 1/1. Functionally, catalyzes a salvage reaction resulting in the formation of AMP, that is energically less costly than de novo synthesis. In Gloeobacter violaceus (strain ATCC 29082 / PCC 7421), this protein is Adenine phosphoribosyltransferase.